We begin with the raw amino-acid sequence, 164 residues long: Endoribonuclease YbeY (164 aa).

The Zn(2+) site is built by His-117, His-121, and His-127.

This sequence belongs to the endoribonuclease YbeY family. Zn(2+) serves as cofactor.

The protein localises to the cytoplasm. Single strand-specific metallo-endoribonuclease involved in late-stage 70S ribosome quality control and in maturation of the 3' terminus of the 16S rRNA. In Mycoplasma mycoides subsp. mycoides SC (strain CCUG 32753 / NCTC 10114 / PG1), this protein is Endoribonuclease YbeY.